The following is a 119-amino-acid chain: Acidic phospholipase A2 natratoxin (119 aa).

7 disulfides stabilise this stretch: cysteine 11–cysteine 71, cysteine 26–cysteine 118, cysteine 28–cysteine 44, cysteine 43–cysteine 99, cysteine 50–cysteine 92, cysteine 60–cysteine 85, and cysteine 78–cysteine 90. Ca(2+)-binding residues include tyrosine 27, glycine 29, and glycine 31. Histidine 47 is a catalytic residue. Position 48 (aspartate 48) interacts with Ca(2+). The active site involves aspartate 93.

Belongs to the phospholipase A2 family. Group I subfamily. D49 sub-subfamily. Ca(2+) is required as a cofactor. Expressed by the venom gland.

The protein resides in the secreted. It carries out the reaction a 1,2-diacyl-sn-glycero-3-phosphocholine + H2O = a 1-acyl-sn-glycero-3-phosphocholine + a fatty acid + H(+). Its function is as follows. Snake venom phospholipase A2 (PLA2) that has an effectively inhibitory effect on A-type K(+) currents (Kv/KCN) in acutely dissociated rat dorsal root ganglion (DRG) neurons. This inhibitory effect is independent of its enzymatic activity. PLA2 catalyzes the calcium-dependent hydrolysis of the 2-acyl groups in 3-sn-phosphoglycerides. The polypeptide is Acidic phospholipase A2 natratoxin (Naja atra (Chinese cobra)).